The primary structure comprises 415 residues: Multifunctional CCA protein (415 aa).

Positions 8 and 11 each coordinate ATP. CTP-binding residues include Gly8 and Arg11. Asp21 and Asp23 together coordinate Mg(2+). Residues Arg91, Arg137, and Arg140 each contribute to the ATP site. Residues Arg91, Arg137, and Arg140 each contribute to the CTP site. The HD domain occupies 228 to 329 (TGIHTLMTLA…VGLFDSIDAW (102 aa)).

This sequence belongs to the tRNA nucleotidyltransferase/poly(A) polymerase family. Bacterial CCA-adding enzyme type 1 subfamily. As to quaternary structure, monomer. Can also form homodimers and oligomers. Requires Mg(2+) as cofactor. Ni(2+) serves as cofactor.

The catalysed reaction is a tRNA precursor + 2 CTP + ATP = a tRNA with a 3' CCA end + 3 diphosphate. It catalyses the reaction a tRNA with a 3' CCA end + 2 CTP + ATP = a tRNA with a 3' CCACCA end + 3 diphosphate. Its function is as follows. Catalyzes the addition and repair of the essential 3'-terminal CCA sequence in tRNAs without using a nucleic acid template. Adds these three nucleotides in the order of C, C, and A to the tRNA nucleotide-73, using CTP and ATP as substrates and producing inorganic pyrophosphate. tRNA 3'-terminal CCA addition is required both for tRNA processing and repair. Also involved in tRNA surveillance by mediating tandem CCA addition to generate a CCACCA at the 3' terminus of unstable tRNAs. While stable tRNAs receive only 3'-terminal CCA, unstable tRNAs are marked with CCACCA and rapidly degraded. This Cronobacter sakazakii (strain ATCC BAA-894) (Enterobacter sakazakii) protein is Multifunctional CCA protein.